A 352-amino-acid polypeptide reads, in one-letter code: MERDFLGLGSKNSPITVKEETSESSRDSAPNRGMNWSFSNKVSASSSQFLSFRPTQEDRHRKSGNYHLPHSGSFMPSSVADVYDSTRKAPYSSVQGVRMFPNSNQHEETNAVSMSMPGFQSHHYAPGGRSFMNNNNNSQPLVGVPIMAPPISILPPPGSIVGTTDIRSSSKPIGSPAQLTIFYAGSVCVYDDISPEKAKAIMLLAGNGSSMPQVFSPPQTHQQVVHHTRASVDSSAMPPSFMPTISYLSPEAGSSTNGLGATKATRGLTSTYHNNQANGSNINCPVPVSCSTNVMAPTVALPLARKASLARFLEKRKERVTSVSPYCLDKKSSTDCRRSMSECISSSLSSAT.

The segment at 1–71 (MERDFLGLGS…KSGNYHLPHS (71 aa)) is disordered. A compositionally biased stretch (basic and acidic residues) spans 17 to 26 (VKEETSESSR). Polar residues predominate over residues 34–54 (MNWSFSNKVSASSSQFLSFRP). The region spanning 172–207 (PIGSPAQLTIFYAGSVCVYDDISPEKAKAIMLLAGN) is the Tify domain. A Jas motif is present at residues 302 to 326 (PLARKASLARFLEKRKERVTSVSPY). Residues 304–311 (ARKASLAR) carry the Nuclear localization signal motif.

This sequence belongs to the TIFY/JAZ family. As to quaternary structure, homo- and heterodimer. Interacts with COI1, MYC2, MYC3, MYC4, TIFY10A/JAZ1, TIFY10B/JAZ2, TIFY6A/JAZ4, TIFY5A/JAZ8, TIFY7/JAZ9, TIFY9/JAZ10 and TIFY3A/JAZ11. Interacts (via TIFY domain) with AFPH2/NINJA. Post-translationally, ubiquitinated. Targeted for degradation by the SCF(COI1) E3 ubiquitin ligase-proteasome pathway during jasmonate signaling. Srtongly expressed in root tips.

It is found in the nucleus. Functionally, repressor of jasmonate responses. Jasmonoyl-isoleucine (JA-Ile) specifically promotes COI1-TIFY6B/JAZ3 interaction. Acts as a negative regulator of MYC2 function. Feed-back regulated by MYC2. This chain is Protein TIFY 6B (TIFY6B), found in Arabidopsis thaliana (Mouse-ear cress).